Consider the following 90-residue polypeptide: UPF0335 protein Smed_2680 (90 aa).

The protein belongs to the UPF0335 family.

In Sinorhizobium medicae (strain WSM419) (Ensifer medicae), this protein is UPF0335 protein Smed_2680.